The following is a 239-amino-acid chain: Probable transcriptional regulatory protein BLi00754/BL02339 (239 aa).

Belongs to the TACO1 family. YeeN subfamily.

It localises to the cytoplasm. In Bacillus licheniformis (strain ATCC 14580 / DSM 13 / JCM 2505 / CCUG 7422 / NBRC 12200 / NCIMB 9375 / NCTC 10341 / NRRL NRS-1264 / Gibson 46), this protein is Probable transcriptional regulatory protein BLi00754/BL02339.